The following is a 245-amino-acid chain: 1-(5-phosphoribosyl)-5-[(5-phosphoribosylamino)methylideneamino] imidazole-4-carboxamide isomerase (245 aa).

D7 functions as the Proton acceptor in the catalytic mechanism. D129 functions as the Proton donor in the catalytic mechanism.

The protein belongs to the HisA/HisF family.

It localises to the cytoplasm. It carries out the reaction 1-(5-phospho-beta-D-ribosyl)-5-[(5-phospho-beta-D-ribosylamino)methylideneamino]imidazole-4-carboxamide = 5-[(5-phospho-1-deoxy-D-ribulos-1-ylimino)methylamino]-1-(5-phospho-beta-D-ribosyl)imidazole-4-carboxamide. The protein operates within amino-acid biosynthesis; L-histidine biosynthesis; L-histidine from 5-phospho-alpha-D-ribose 1-diphosphate: step 4/9. The protein is 1-(5-phosphoribosyl)-5-[(5-phosphoribosylamino)methylideneamino] imidazole-4-carboxamide isomerase of Shewanella baltica (strain OS195).